A 432-amino-acid chain; its full sequence is T-box transcription factor T (432 aa).

Positions 49–217 form a DNA-binding region, T-box; it reads LWTRFKELTN…HNPFAKAFLD (169 aa). The disordered stretch occupies residues 274–306; that stretch reads CERYSSLRNHRSAPYPSPYTHRNNSPNNLADNS. A compositionally biased stretch (polar residues) spans 293–306; sequence THRNNSPNNLADNS.

As to quaternary structure, when not bound to DNA, exists as a monomer. Binds DNA as a dimer. Expressed in presumptive mesodermal cells around the blastopore, and then in the notochord.

The protein localises to the nucleus. Functionally, involved in the transcriptional regulation of genes required for mesoderm formation and differentiation. Binds to the palindromic T site 5'-TTCACACCTAGGTGTGAA-3' DNA sequence. Causes dorsal mesodermal differentiation of animal cap ectoderm when co-expressed with wnt8 and noggin. None of these molecules causes dorsal mesoderm formation when expressed alone. Establishes the left/right axis at early gastrula stage by directly up-regulating mesodermal expression of zic3. The polypeptide is T-box transcription factor T (Xenopus laevis (African clawed frog)).